Reading from the N-terminus, the 469-residue chain is 3-isopropylmalate dehydratase large subunit (469 aa).

3 residues coordinate [4Fe-4S] cluster: Cys347, Cys408, and Cys411.

The protein belongs to the aconitase/IPM isomerase family. LeuC type 1 subfamily. Heterodimer of LeuC and LeuD. It depends on [4Fe-4S] cluster as a cofactor.

The enzyme catalyses (2R,3S)-3-isopropylmalate = (2S)-2-isopropylmalate. It participates in amino-acid biosynthesis; L-leucine biosynthesis; L-leucine from 3-methyl-2-oxobutanoate: step 2/4. Functionally, catalyzes the isomerization between 2-isopropylmalate and 3-isopropylmalate, via the formation of 2-isopropylmaleate. This chain is 3-isopropylmalate dehydratase large subunit, found in Actinobacillus pleuropneumoniae serotype 3 (strain JL03).